Consider the following 329-residue polypeptide: MMSHNTTELSAIPRGVQELSLVLASLIVIANLLLALGIVLDRHLRSPPAGCFFLSLLLAGLLTGLALPTLPGLWNRSHQGYWSCLLLHLAPNFCFLSLLANLLLVHGERYMAVLQPLRPHGSVRLALFLTWISSLLFASLPALGWNHWSPGANCSSQAIFPAPYLYLEVYGLLLPAVGATALLSVRVLATAHHQLREIRRLERAVCRDAPSTLARALTWRQARAQAGATLLFLLCWGPYVATLLLSVLAYERRPPLGPVTLLSLISLGSASAAVVPVAMGLGDQRYTAPWRTAAQRWLQVLRGRPKRANPGPSTAYHSSSQCSTDLDLN.

Topologically, residues 1 to 18 are extracellular; it reads MMSHNTTELSAIPRGVQE. A glycan (N-linked (GlcNAc...) asparagine) is linked at Asn5. A helical membrane pass occupies residues 19–39; sequence LSLVLASLIVIANLLLALGIV. Topologically, residues 40–49 are cytoplasmic; that stretch reads LDRHLRSPPA. A helical membrane pass occupies residues 50 to 70; sequence GCFFLSLLLAGLLTGLALPTL. The Extracellular portion of the chain corresponds to 71 to 84; it reads PGLWNRSHQGYWSC. Asn75 is a glycosylation site (N-linked (GlcNAc...) asparagine). An intrachain disulfide couples Cys84 to Cys154. Residues 85 to 105 form a helical membrane-spanning segment; sequence LLLHLAPNFCFLSLLANLLLV. The Cytoplasmic portion of the chain corresponds to 106–124; that stretch reads HGERYMAVLQPLRPHGSVR. A helical membrane pass occupies residues 125-145; sequence LALFLTWISSLLFASLPALGW. The Extracellular segment spans residues 146 to 157; the sequence is NHWSPGANCSSQ. Asn153 is a glycosylation site (N-linked (GlcNAc...) asparagine). The helical transmembrane segment at 158–178 threads the bilayer; that stretch reads AIFPAPYLYLEVYGLLLPAVG. At 179-229 the chain is on the cytoplasmic side; sequence ATALLSVRVLATAHHQLREIRRLERAVCRDAPSTLARALTWRQARAQAGAT. The chain crosses the membrane as a helical span at residues 230–250; the sequence is LLFLLCWGPYVATLLLSVLAY. The Extracellular portion of the chain corresponds to 251–260; it reads ERRPPLGPVT. Residues 261–281 form a helical membrane-spanning segment; the sequence is LLSLISLGSASAAVVPVAMGL. The Cytoplasmic segment spans residues 282-329; sequence GDQRYTAPWRTAAQRWLQVLRGRPKRANPGPSTAYHSSSQCSTDLDLN. A disordered region spans residues 306–329; it reads KRANPGPSTAYHSSSQCSTDLDLN. Positions 311-329 are enriched in polar residues; that stretch reads GPSTAYHSSSQCSTDLDLN.

The protein belongs to the G-protein coupled receptor 1 family.

The protein localises to the cell membrane. Receptor for bile acid. Bile acid-binding induces its internalization, activation of extracellular signal-regulated kinase and intracellular cAMP production. May be involved in the suppression of macrophage functions by bile acids. Involved in bile acid promoted GLP1R secretion. This chain is G-protein coupled bile acid receptor 1 (Gpbar1), found in Rattus norvegicus (Rat).